The sequence spans 492 residues: NADH-quinone oxidoreductase subunit N (492 aa).

14 helical membrane-spanning segments follow: residues 13–33 (MLPVLLVLVGAIVSTLGGFWL), 43–63 (ILFVLASGASLVWLWGGAPWA), 82–102 (AALLLGGTVLLGALLTLLVSL), 110–132 (VSFAEFDALLMYAVTGCLLIAFS), 136–155 (IVMLIGLEIMSLASYVLATL), 169–189 (FLLGSVGSAILIYGLAFLYGA), 210–230 (IGILVTGTLLVLSGFGVKIAL), 245–265 (PTLVSLFLSTVVKVAAFAGML), 272–292 (LAAGPGWHSVLQILVALTLVI), 306–326 (LLAYSAVAHTGFLAMTLLGDT), 331–351 (AALGYYLLVYTLMTVGALAVV), 377–397 (AVALAFCLASLAGLPPFAGFF), 410–430 (GYLLISVLAVLSSVAALVYYL), and 457–477 (VAVALSLIGIVVLGLLPNLWY).

The protein belongs to the complex I subunit 2 family. NDH-1 is composed of 15 different subunits. Subunits NuoA, H, J, K, L, M, N constitute the membrane sector of the complex.

It is found in the cell membrane. It catalyses the reaction a quinone + NADH + 5 H(+)(in) = a quinol + NAD(+) + 4 H(+)(out). In terms of biological role, NDH-1 shuttles electrons from NADH, via FMN and iron-sulfur (Fe-S) centers, to quinones in the respiratory chain. The immediate electron acceptor for the enzyme in this species is believed to be a menaquinone. Couples the redox reaction to proton translocation (for every two electrons transferred, four hydrogen ions are translocated across the cytoplasmic membrane), and thus conserves the redox energy in a proton gradient. The polypeptide is NADH-quinone oxidoreductase subunit N (Deinococcus radiodurans (strain ATCC 13939 / DSM 20539 / JCM 16871 / CCUG 27074 / LMG 4051 / NBRC 15346 / NCIMB 9279 / VKM B-1422 / R1)).